Consider the following 1391-residue polypeptide: DNA-directed RNA polymerase subunit beta' (1391 aa).

4 residues coordinate Zn(2+): C72, C74, C87, and C90. Mg(2+)-binding residues include D462, D464, and D466. 4 residues coordinate Zn(2+): C816, C890, C897, and C900.

This sequence belongs to the RNA polymerase beta' chain family. The RNAP catalytic core consists of 2 alpha, 1 beta, 1 beta' and 1 omega subunit. When a sigma factor is associated with the core the holoenzyme is formed, which can initiate transcription. Requires Mg(2+) as cofactor. It depends on Zn(2+) as a cofactor.

The enzyme catalyses RNA(n) + a ribonucleoside 5'-triphosphate = RNA(n+1) + diphosphate. Functionally, DNA-dependent RNA polymerase catalyzes the transcription of DNA into RNA using the four ribonucleoside triphosphates as substrates. The sequence is that of DNA-directed RNA polymerase subunit beta' from Neisseria gonorrhoeae (strain ATCC 700825 / FA 1090).